The following is a 243-amino-acid chain: Large ribosomal subunit protein uL3 (243 aa).

Disordered regions lie at residues 139–164 (VSHRSIGSTGGRQDPGKTFKNKKMPG) and 218–243 (KPGKFRLADGGGEQTAAAPAAEQEGV). Position 151 is an N5-methylglutamine (Gln-151). The span at 231–243 (QTAAAPAAEQEGV) shows a compositional bias: low complexity.

This sequence belongs to the universal ribosomal protein uL3 family. In terms of assembly, part of the 50S ribosomal subunit. Forms a cluster with proteins L14 and L19. Methylated by PrmB.

Its function is as follows. One of the primary rRNA binding proteins, it binds directly near the 3'-end of the 23S rRNA, where it nucleates assembly of the 50S subunit. In Rhodopseudomonas palustris (strain BisB18), this protein is Large ribosomal subunit protein uL3.